Here is a 330-residue protein sequence, read N- to C-terminus: Fructose-1,6-bisphosphatase class 1 (330 aa).

Positions 78, 97, 99, and 100 each coordinate Mg(2+). Substrate contacts are provided by residues 100–103 (DGSS) and Asn188. Position 260 (Glu260) interacts with Mg(2+).

The protein belongs to the FBPase class 1 family. Homotetramer. Mg(2+) is required as a cofactor.

It is found in the cytoplasm. It carries out the reaction beta-D-fructose 1,6-bisphosphate + H2O = beta-D-fructose 6-phosphate + phosphate. It functions in the pathway carbohydrate biosynthesis; gluconeogenesis. This is Fructose-1,6-bisphosphatase class 1 from Paracoccus denitrificans (strain Pd 1222).